Reading from the N-terminus, the 114-residue chain is T cell receptor beta variable 28 (114 aa).

The first 26 residues, 1–26 (MGIRLLCRVAFCFLAVGLVDVKVTQS), serve as a signal peptide directing secretion. The Ig-like domain maps to 27-114 (SRYLVKRTGE…TSMYLCASSL (88 aa)). Cysteine 42 and cysteine 110 are joined by a disulfide. An N-linked (GlcNAc...) asparagine glycan is attached at asparagine 103.

Alpha-beta TR is a heterodimer composed of an alpha and beta chain; disulfide-linked. The alpha-beta TR is associated with the transmembrane signaling CD3 coreceptor proteins to form the TR-CD3 (TcR or TCR). The assembly of alpha-beta TR heterodimers with CD3 occurs in the endoplasmic reticulum where a single alpha-beta TR heterodimer associates with one CD3D-CD3E heterodimer, one CD3G-CD3E heterodimer and one CD247 homodimer forming a stable octameric structure. CD3D-CD3E and CD3G-CD3E heterodimers preferentially associate with TR alpha and TR beta chains, respectively. The association of the CD247 homodimer is the last step of TcR assembly in the endoplasmic reticulum and is required for transport to the cell surface.

The protein resides in the cell membrane. Functionally, v region of the variable domain of T cell receptor (TR) beta chain that participates in the antigen recognition. Alpha-beta T cell receptors are antigen specific receptors which are essential to the immune response and are present on the cell surface of T lymphocytes. Recognize peptide-major histocompatibility (MH) (pMH) complexes that are displayed by antigen presenting cells (APC), a prerequisite for efficient T cell adaptive immunity against pathogens. Binding of alpha-beta TR to pMH complex initiates TR-CD3 clustering on the cell surface and intracellular activation of LCK that phosphorylates the ITAM motifs of CD3G, CD3D, CD3E and CD247 enabling the recruitment of ZAP70. In turn ZAP70 phosphorylates LAT, which recruits numerous signaling molecules to form the LAT signalosome. The LAT signalosome propagates signal branching to three major signaling pathways, the calcium, the mitogen-activated protein kinase (MAPK) kinase and the nuclear factor NF-kappa-B (NF-kB) pathways, leading to the mobilization of transcription factors that are critical for gene expression and essential for T cell growth and differentiation. The T cell repertoire is generated in the thymus, by V-(D)-J rearrangement. This repertoire is then shaped by intrathymic selection events to generate a peripheral T cell pool of self-MH restricted, non-autoaggressive T cells. Post-thymic interaction of alpha-beta TR with the pMH complexes shapes TR structural and functional avidity. In Homo sapiens (Human), this protein is T cell receptor beta variable 28.